Reading from the N-terminus, the 420-residue chain is MTRTAKLTIIPPGKPLSGRAMPPGSKSITNRALLLAGLAKGTSRLTGALKSDDTRYMADALRAMGVSIDEPDDTTFVVTGSGRLQPPKAPLFLGNAGTATRFLTAAAALVDGTVVVDGDEHMRKRPIGPLVEAMRTLGIDVTAETGCPPVTVKGTGRFQADRIRIDGGLSSQYVSALLMMAAGGDRPFDIELVGEDIGALGYIDLTTAAMKAFGAKVEKTSPVTWRVEPTGYRAADFIVEPDASAATYLWAAEVLTGGAIDLGVPSDAFSQPDARAYDMIARFPQLPAEIDGSQMQDAVPTLAVLAAFNETPVRFVGIANLRVKECDRIRALSSGLNRIRPGLAREEGDDLIVKSDPALVGKRLPAEIDSFADHRIAMSFALAGLKIDGITILDPDCVGKTFPAYWRTLAALGVTYQDKD.

3 residues coordinate 3-phosphoshikimate: lysine 26, serine 27, and arginine 31. Lysine 26 provides a ligand contact to phosphoenolpyruvate. Phosphoenolpyruvate is bound by residues glycine 97 and arginine 125. 6 residues coordinate 3-phosphoshikimate: serine 170, serine 171, glutamine 172, aspartate 297, asparagine 320, and lysine 324. Glutamine 172 contacts phosphoenolpyruvate. Residue aspartate 297 is the Proton acceptor of the active site. Phosphoenolpyruvate contacts are provided by arginine 328, arginine 375, and lysine 400.

This sequence belongs to the EPSP synthase family. As to quaternary structure, monomer.

The protein localises to the cytoplasm. The enzyme catalyses 3-phosphoshikimate + phosphoenolpyruvate = 5-O-(1-carboxyvinyl)-3-phosphoshikimate + phosphate. It participates in metabolic intermediate biosynthesis; chorismate biosynthesis; chorismate from D-erythrose 4-phosphate and phosphoenolpyruvate: step 6/7. In terms of biological role, catalyzes the transfer of the enolpyruvyl moiety of phosphoenolpyruvate (PEP) to the 5-hydroxyl of shikimate-3-phosphate (S3P) to produce enolpyruvyl shikimate-3-phosphate and inorganic phosphate. The protein is 3-phosphoshikimate 1-carboxyvinyltransferase of Rhizobium leguminosarum bv. trifolii (strain WSM2304).